Reading from the N-terminus, the 456-residue chain is uncharacterized protein (456 aa).

Residues 3–61 enclose the TRAM domain; that stretch reads TIKKNEVKTGKVIDLTHEGHGVVKVDRYPIFIPNALIDEEIKFKLIKVKKNFAIGKLIE. Residues cysteine 74, cysteine 80, cysteine 83, and cysteine 162 each coordinate [4Fe-4S] cluster. S-adenosyl-L-methionine-binding residues include glutamine 286, tyrosine 315, glutamate 336, and aspartate 384. Catalysis depends on cysteine 411, which acts as the Nucleophile.

This sequence belongs to the class I-like SAM-binding methyltransferase superfamily. RNA M5U methyltransferase family.

This is an uncharacterized protein from Staphylococcus epidermidis (strain ATCC 35984 / DSM 28319 / BCRC 17069 / CCUG 31568 / BM 3577 / RP62A).